We begin with the raw amino-acid sequence, 183 residues long: Probable adenylyl-sulfate kinase (183 aa).

An ATP-binding site is contributed by 17–24; it reads GLPGSGKT. Residue S91 is the Phosphoserine intermediate of the active site.

The protein belongs to the APS kinase family.

It catalyses the reaction adenosine 5'-phosphosulfate + ATP = 3'-phosphoadenylyl sulfate + ADP + H(+). Its pathway is sulfur metabolism; hydrogen sulfide biosynthesis; sulfite from sulfate: step 2/3. In terms of biological role, catalyzes the synthesis of activated sulfate. The polypeptide is Probable adenylyl-sulfate kinase (cysC) (Aeropyrum pernix (strain ATCC 700893 / DSM 11879 / JCM 9820 / NBRC 100138 / K1)).